Consider the following 688-residue polypeptide: ATP-dependent zinc metalloprotease FTSH 6, chloroplastic (688 aa).

The N-terminal 75 residues, 1 to 75 (MKMASSSSAL…GFTSALGTVL (75 aa)), are a transit peptide targeting the chloroplast. Over residues 25 to 36 (QQFQKPASLSKS) the composition is skewed to polar residues. The tract at residues 25-44 (QQFQKPASLSKSSHTHKPSL) is disordered. Residues 76–83 (AHPAKAEP) constitute a thylakoid transit peptide. At 84-168 (EAPIEATSNR…AHPMNVNWGA (85 aa)) the chain is on the lumenal, thylakoid side. The chain crosses the membrane as a helical span at residues 169-189 (FLLNFLGNLGFPLILLVSLLL). The Stromal segment spans residues 190–688 (TSSSRRNPAG…RIRINDLISV (499 aa)). 264–271 (GPPGTGKT) serves as a coordination point for ATP. Histidine 485 lines the Zn(2+) pocket. Glutamate 486 is a catalytic residue. Positions 489 and 563 each coordinate Zn(2+).

In the N-terminal section; belongs to the AAA ATPase family. This sequence in the C-terminal section; belongs to the peptidase M41 family. It depends on Zn(2+) as a cofactor.

It localises to the plastid. Its subcellular location is the chloroplast thylakoid membrane. In terms of biological role, probable ATP-dependent zinc metallopeptidase. Involved in the degradation of the light-harvesting complex of photosystem II (LHC II) during senescence or high light acclimation. This is ATP-dependent zinc metalloprotease FTSH 6, chloroplastic (FTSH6) from Arabidopsis thaliana (Mouse-ear cress).